The chain runs to 378 residues: Phosphoserine aminotransferase (378 aa).

R53 is a binding site for L-glutamate. The pyridoxal 5'-phosphate site is built by W117, T167, D190, and Q213. K214 is subject to N6-(pyridoxal phosphate)lysine. 255–256 contacts pyridoxal 5'-phosphate; the sequence is NT.

It belongs to the class-V pyridoxal-phosphate-dependent aminotransferase family. SerC subfamily. As to quaternary structure, homodimer. Pyridoxal 5'-phosphate serves as cofactor.

The protein resides in the cytoplasm. The enzyme catalyses O-phospho-L-serine + 2-oxoglutarate = 3-phosphooxypyruvate + L-glutamate. It carries out the reaction 4-(phosphooxy)-L-threonine + 2-oxoglutarate = (R)-3-hydroxy-2-oxo-4-phosphooxybutanoate + L-glutamate. It functions in the pathway amino-acid biosynthesis; L-serine biosynthesis; L-serine from 3-phospho-D-glycerate: step 2/3. The protein operates within cofactor biosynthesis; pyridoxine 5'-phosphate biosynthesis; pyridoxine 5'-phosphate from D-erythrose 4-phosphate: step 3/5. Catalyzes the reversible conversion of 3-phosphohydroxypyruvate to phosphoserine and of 3-hydroxy-2-oxo-4-phosphonooxybutanoate to phosphohydroxythreonine. This is Phosphoserine aminotransferase from Ralstonia nicotianae (strain ATCC BAA-1114 / GMI1000) (Ralstonia solanacearum).